The following is a 497-amino-acid chain: MNKEILAVVEAVSNEKSLPREKIFEALECALAIATKKKYDQEIDVRVKINRKNGNFETFRRWLVVNQVLQPTKEITLEAAKFEDVTVKVNDYIEDKMISVTFDRITTQTAKQVIVQKVREAERAMIVEQFRKYFGKILTGIVKKINRESITLDLGNNAEALILKEDMLPRENFRLGDRVRGVLYAIYPESRGAQLFVTRSKPEMLIELFKIEVPEIGEEIIEIKSAARDPGSRAKIAVKSNDKRVDAVGACVGMRGARVQAVSSELCGERIDIVLWDKNSAQFIINSMAPAEVSSIVLDEDRHTIDIAVDSNNLAQAIGRNGQNVRLASQLSGWEINVMTVDDLKLKHQEEKDKILNIFTKYLKIDQKISNILIDEGFSSIEELVYIPFNELLNINSITQELAYSIRESAKKALCAIELENKKVINERKLHKDLLNLKGMNQKLAFKLAKKNIFSLEDLAEQGIDDLIDIENLNSNTAGMLIMAARNICWFGNKTSA.

The 66-residue stretch at 135–200 (GKILTGIVKK…RGAQLFVTRS (66 aa)) folds into the S1 motif domain. A KH domain is found at 302-372 (RHTIDIAVDS…LKIDQKISNI (71 aa)). Repeat copies occupy residues 364-414 (KIDQ…KKAL) and 439-489 (GMNQ…RNIC). The interval 364–489 (KIDQKISNIL…MLIMAARNIC (126 aa)) is 2 X 51 AA approximate repeats.

The protein belongs to the NusA family. As to quaternary structure, monomer. Binds directly to the core enzyme of the DNA-dependent RNA polymerase and to nascent RNA.

The protein resides in the cytoplasm. In terms of biological role, participates in both transcription termination and antitermination. In Buchnera aphidicola subsp. Baizongia pistaciae (strain Bp), this protein is Transcription termination/antitermination protein NusA.